The chain runs to 1345 residues: Vascular endothelial growth factor receptor 2 (1345 aa).

An N-terminal signal peptide occupies residues 1–19 (MESKALLAVALWFCVETRA). Topologically, residues 20–762 (ASVGLPGDFL…EGAQEKTNLE (743 aa)) are extracellular. N-linked (GlcNAc...) asparagine glycans are attached at residues Asn46, Asn98, Asn145, Asn160, and Asn247. Ig-like C2-type domains follow at residues 46–111 (NTTL…RDVD), 143–209 (NKNK…INDE), 226–325 (YDVI…TFVR), 330–416 (PFIA…HMVS), 423–542 (PQIG…RVIS), 549–656 (PEIT…LVKQ), and 665–751 (PMIT…TLFI). Cys53 and Cys105 form a disulfide bridge. Cys152 and Cys202 form a disulfide bridge. Cysteines 248 and 309 form a disulfide. N-linked (GlcNAc...) asparagine glycans are attached at residues Asn320, Asn376, Asn397, Asn509, Asn521, Asn578, Asn611, Asn617, Asn629, Asn673, Asn702, and Asn719. 2 disulfide bridges follow: Cys447–Cys528 and Cys569–Cys640. Cys686 and Cys735 are oxidised to a cystine. The chain crosses the membrane as a helical span at residues 763-783 (VIILVGTAVIAMFFWLLLVIV). At 784-1345 (LRTVKRANEG…SGTTLRSPPV (562 aa)) the chain is on the cytoplasmic side. Tyr799 bears the Phosphotyrosine mark. The 329-residue stretch at 832–1160 (LKLGKPLGRG…FSELVEHLGN (329 aa)) folds into the Protein kinase domain. ATP contacts are provided by residues 838-846 (LGRGAFGQV) and Lys866. Position 949 is a phosphotyrosine; by autocatalysis (Tyr949). Phosphoserine occurs at positions 980 and 982. Tyr994 carries the post-translational modification Phosphotyrosine; by autocatalysis. Cys1022 and Cys1043 are oxidised to a cystine. Asp1026 (proton acceptor) is an active-site residue. Phosphotyrosine; by autocatalysis is present on residues Tyr1052, Tyr1057, Tyr1173, and Tyr1212. Residues Ser1229 and Ser1233 each carry the phosphoserine modification. Thr1236 is subject to Phosphothreonine. The disordered stretch occupies residues 1272–1316 (DRNKLSPSFGGMMPSKSRESVASEGSNQTSGYQSGYHSDDTDTTV). The span at 1294 to 1307 (SEGSNQTSGYQSGY) shows a compositional bias: polar residues. Residues Tyr1303, Tyr1307, and Tyr1317 each carry the phosphotyrosine; by autocatalysis modification.

The protein belongs to the protein kinase superfamily. Tyr protein kinase family. CSF-1/PDGF receptor subfamily. Homodimer in the presence of bound dimeric VEGFA, VEGFC or VEGFD ligands; monomeric in the absence of bound ligands. Can also form heterodimers with FLT1/VEGFR1 and KDR/VEGFR2. Interacts (tyrosine phosphorylated) with LFYN, NCK1, PLCG1. Interacts (tyrosine-phosphorylated active form preferentially) with DAB2IP (via C2 domain and active form preferentially); the interaction occurs at the late phase of VEGFA response and inhibits KDR/VEGFR2 activity. Interacts with SHBSH2D2A/TSAD, GRB2, MYOF, CBL and PDCD6. Interacts (via C-terminus domain) with ERN1 (via kinase domain); the interaction is facilitated in a XBP1 isoform 1- and vascular endothelial growth factor (VEGF)-dependent manner in endothelial cells. Interacts (via juxtamembrane region) with chaperone PDCL3 (via thioredoxin fold region); the interaction leads to increased KDR/VEGFR2 abundance through inhibition of its ubiquitination and degradation. Interacts (tyrosine phosphorylated) with CCDC88A/GIV (via SH2-like region); binding requires autophosphorylation of the KDR/VEGFR2 C-terminal region. Interacts with isoform 2 of BSG. Interacts with SLC31A1; this interaction is induced upon VEGFA stimulation leading to SLC31A1 and KDR subsequent co-internalization to early endosomes, thereby activating KDR downstream signaling in endothelial cells. N-glycosylated. In terms of processing, ubiquitinated. Tyrosine phosphorylation of the receptor promotes its poly-ubiquitination, leading to its degradation via the proteasome or lysosomal proteases. Post-translationally, autophosphorylated on tyrosine residues upon ligand binding. Autophosphorylation occurs in trans, i.e. one subunit of the dimeric receptor phosphorylates tyrosine residues on the other subunit. Phosphorylation at Tyr-949 is important for interaction with SH2D2A/TSAD and VEGFA-mediated reorganization of the actin cytoskeleton. Phosphorylation at Tyr-1173 is important for interaction with PLCG1 and SHB. Phosphorylation at Tyr-1212 is important for interaction with NCK1 and FYN. Dephosphorylated by PTPRJ at Tyr-799, Tyr-949, Tyr-994, Tyr-1052, Tyr-1057, Tyr-1173 and Tyr-1212. The inhibitory disulfide bond between Cys-1022 and Cys-1043 may serve as a specific molecular switch for H(2)S-induced modification that regulates KDR/VEGFR2 function. Expressed in endothelial cells (at protein level). Detected in embryonic endothelial cells, as well as hematopoietic stem and progenitor cells. Detected in vascular endothelium. Expressed at high levels in adult heart, lung, kidney, brain and skeletal muscle, but is also expressed at lower levels in most other adult tissues.

The protein localises to the cell junction. Its subcellular location is the endoplasmic reticulum. It localises to the cell membrane. It is found in the cytoplasm. The protein resides in the nucleus. The protein localises to the cytoplasmic vesicle. Its subcellular location is the early endosome. It localises to the secreted. It catalyses the reaction L-tyrosyl-[protein] + ATP = O-phospho-L-tyrosyl-[protein] + ADP + H(+). Present in an inactive conformation in the absence of bound ligand. Binding of VEGFA, VEGFC or VEGFD leads to dimerization and activation by autophosphorylation on tyrosine residues. May be regulated by hydrogen sulfide (H(2)S) levels via a sensitive intracellular disulfide bond. Its function is as follows. Tyrosine-protein kinase that acts as a cell-surface receptor for VEGFA, VEGFC and VEGFD. Plays an essential role in the regulation of angiogenesis, vascular development, vascular permeability, and embryonic hematopoiesis. Promotes proliferation, survival, migration and differentiation of endothelial cells. Promotes reorganization of the actin cytoskeleton. Isoforms lacking a transmembrane domain, such as isoform 2, may function as decoy receptors for VEGFA, VEGFC and/or VEGFD. Isoform 2 plays an important role as a negative regulator of VEGFA- and VEGFC-mediated lymphangiogenesis by limiting the amount of free VEGFA and/or VEGFC and by preventing their binding to FLT4. Modulates FLT1 and FLT4 signaling by forming heterodimers. Binding of vascular growth factors to isoform 1 leads to the activation of several signaling cascades. Activation of PLCG1 leads to the production of the cellular signaling molecules diacylglycerol and inositol 1,4,5-trisphosphate and the activation of protein kinase C. Mediates activation of MAPK1/ERK2, MAPK3/ERK1 and the MAP kinase signaling pathway, as well as of the AKT1 signaling pathway. Mediates phosphorylation of PIK3R1, the regulatory subunit of phosphatidylinositol 3-kinase, reorganization of the actin cytoskeleton and activation of PTK2/FAK1. Required for VEGFA-mediated induction of NOS2 and NOS3, leading to the production of the signaling molecule nitric oxide (NO) by endothelial cells. Phosphorylates PLCG1. Promotes phosphorylation of FYN, NCK1, NOS3, PIK3R1, PTK2/FAK1 and SRC. This chain is Vascular endothelial growth factor receptor 2, found in Mus musculus (Mouse).